The chain runs to 452 residues: MTPTTVVSAAALDAEPGLDAFGNDPWWIILIKALAVFVFLMLCVLMMIMADRKVMGRMQQRHGPNRFGPWGLLQSLADGVKLSLKEDLIPRTVDKVIYIAAPMIAAIPAFFAFSVIPVGPEVTMFGVETRLQLTDLPVAVLLVLATASLGVYGIVLAGWASRSPYPLLGGLRASAQVISYEIAMGLSFIAVFIYAGTLSTSGIVEAQQNIWFAVILFPSFVIYLITMIGETNRLPFDLPEGEGELVGGFMTEYSSMKFTMFFLAEYVNMVTVSAMSVTLFLGGYLAPPPITTFWPGANEGWWPALWWLIKFVCVMFLFVWVRGSLPRVRYDQLMKLGWKILIPIQLVWITAVAVIRVLNNQEYPGYVTAIVVGVFGLLVFLGLWAWSRAAAKAKAQEAAEHEAELRARRENPMYGGFPVPPMIAPHYGTSVLAEEPRYQPASAPKREEVSGA.

9 helical membrane passes run 28–48, 96–116, 136–156, 177–197, 210–230, 264–286, 301–321, 335–355, and 366–386; these read IILI…LMMI, VIYI…FSVI, LPVA…GIVL, VISY…YAGT, IWFA…MIGE, AEYV…GYLA, WWPA…FVWV, KLGW…VAVI, and YVTA…LWAW.

This sequence belongs to the complex I subunit 1 family. In terms of assembly, NDH-1 is composed of 14 different subunits. Subunits NuoA, H, J, K, L, M, N constitute the membrane sector of the complex.

It is found in the cell membrane. The catalysed reaction is a quinone + NADH + 5 H(+)(in) = a quinol + NAD(+) + 4 H(+)(out). Its function is as follows. NDH-1 shuttles electrons from NADH, via FMN and iron-sulfur (Fe-S) centers, to quinones in the respiratory chain. The immediate electron acceptor for the enzyme in this species is believed to be ubiquinone. Couples the redox reaction to proton translocation (for every two electrons transferred, four hydrogen ions are translocated across the cytoplasmic membrane), and thus conserves the redox energy in a proton gradient. This subunit may bind ubiquinone. The polypeptide is NADH-quinone oxidoreductase subunit H (Thermobifida fusca (strain YX)).